Reading from the N-terminus, the 192-residue chain is Inosine triphosphate pyrophosphatase (192 aa).

11 to 16 serves as a coordination point for ITP; sequence TGNKNK. Position 41 (Glu-41) interacts with Mg(2+). ITP is bound by residues Lys-53, 69–70, Lys-86, 146–149, Lys-169, and 174–175; these read DT, FGWD, and HR.

The protein belongs to the HAM1 NTPase family. In terms of assembly, homodimer. Mg(2+) serves as cofactor. The cofactor is Mn(2+).

It is found in the cytoplasm. The enzyme catalyses ITP + H2O = IMP + diphosphate + H(+). The catalysed reaction is dITP + H2O = dIMP + diphosphate + H(+). It catalyses the reaction XTP + H2O = XMP + diphosphate + H(+). In terms of biological role, pyrophosphatase that hydrolyzes non-canonical purine nucleotides such as inosine triphosphate (ITP), deoxyinosine triphosphate (dITP) or xanthosine 5'-triphosphate (XTP) to their respective monophosphate derivatives. The enzyme does not distinguish between the deoxy- and ribose forms. Probably excludes non-canonical purines from RNA and DNA precursor pools, thus preventing their incorporation into RNA and DNA and avoiding chromosomal lesions. The chain is Inosine triphosphate pyrophosphatase from Ciona intestinalis (Transparent sea squirt).